The chain runs to 379 residues: Lactosylceramide 1,3-N-acetyl-beta-D-glucosaminyltransferase A (379 aa).

Residues 1–12 (MFMNCRRVKKWH) are Cytoplasmic-facing. The helical; Signal-anchor for type II membrane protein transmembrane segment at 13–30 (FLQLLSMCCVMSVLMVCW) threads the bilayer. At 31-379 (EHVDHHVVSH…NTYSCMAAFT (349 aa)) the chain is on the lumenal side. Asn57, Asn113, Asn168, and Asn277 each carry an N-linked (GlcNAc...) asparagine glycan.

It belongs to the glycosyltransferase 31 family.

The protein localises to the golgi apparatus membrane. The enzyme catalyses a beta-D-Gal-(1-&gt;4)-beta-D-Glc-(1&lt;-&gt;1)-Cer(d18:1(4E)) + UDP-N-acetyl-alpha-D-glucosamine = a beta-D-GlcNAc-(1-&gt;3)-beta-D-Gal-(1-&gt;4)-beta-D-Glc-(1&lt;-&gt;1)-Cer(d18:1(4E)) + UDP + H(+). It catalyses the reaction a neolactoside nLc4Cer(d18:1(4E)) + UDP-N-acetyl-alpha-D-glucosamine = a neolactoside IV(3)-beta-GlcNAc-nLc4Cer(d18:1(4E)) + UDP + H(+). It functions in the pathway protein modification; protein glycosylation. Beta-1,3-N-acetylglucosaminyltransferase that plays a key role in the synthesis of lacto- or neolacto-series carbohydrate chains on glycolipids. The chain is Lactosylceramide 1,3-N-acetyl-beta-D-glucosaminyltransferase A (b3gnt5a) from Danio rerio (Zebrafish).